The following is a 135-amino-acid chain: MGILEKKTAGPGGAARKTTTRAAGMAAEDRALAHLQAAGLRLLARNYRTPGRGGGEIDLILRDRDGTLVFVEVRSRASDAYGGAGASIGAAKRRRIVFAARHYLLRWPSPPPCRFDAVLVSGDAVQWLQAAFDAG.

Residues Met1–Arg21 form a disordered region.

Belongs to the UPF0102 family.

The chain is UPF0102 protein Aave_0630 from Paracidovorax citrulli (strain AAC00-1) (Acidovorax citrulli).